We begin with the raw amino-acid sequence, 200 residues long: Small ribosomal subunit protein uS4 (200 aa).

A disordered region spans residues 22 to 42 (TGKELEKRPYAPGPHGPGQRK). The S4 RNA-binding domain maps to 92 to 152 (SRLDNIVYRL…EKSQNLSVVK (61 aa)).

This sequence belongs to the universal ribosomal protein uS4 family. In terms of assembly, part of the 30S ribosomal subunit. Contacts protein S5. The interaction surface between S4 and S5 is involved in control of translational fidelity.

Functionally, one of the primary rRNA binding proteins, it binds directly to 16S rRNA where it nucleates assembly of the body of the 30S subunit. With S5 and S12 plays an important role in translational accuracy. The sequence is that of Small ribosomal subunit protein uS4 from Bacillus licheniformis (strain ATCC 14580 / DSM 13 / JCM 2505 / CCUG 7422 / NBRC 12200 / NCIMB 9375 / NCTC 10341 / NRRL NRS-1264 / Gibson 46).